The chain runs to 708 residues: Double-strand break repair protein MRE11 (708 aa).

Ser2 bears the N-acetylserine mark. Ser2 bears the Phosphoserine mark. Mn(2+)-binding residues include Asp20, His22, and Asp60. The interaction with NBN stretch occupies residues 87–117 (RPVQFEILSDQSVNFGFSKFPWVNYQDGNLN). Asn128 contacts Mn(2+). The active-site Proton donor is His129. His217, His245, and His247 together coordinate Mn(2+). Lys255 participates in a covalent cross-link: Glycyl lysine isopeptide (Lys-Gly) (interchain with G-Cter in SUMO2). Ser275 is modified (phosphoserine). A Glycyl lysine isopeptide (Lys-Gly) (interchain with G-Cter in UFM1) cross-link involves residue Lys282. Lys339 participates in a covalent cross-link: Glycyl lysine isopeptide (Lys-Gly) (interchain with G-Cter in ubiquitin). Lys384 is covalently cross-linked (Glycyl lysine isopeptide (Lys-Gly) (interchain with G-Cter in SUMO)). Residue Lys416 forms a Glycyl lysine isopeptide (Lys-Gly) (interchain with G-Cter in SUMO2) linkage. A Glycyl lysine isopeptide (Lys-Gly) (interchain with G-Cter in SUMO) cross-link involves residue Lys467. Lys480 is covalently cross-linked (Glycyl lysine isopeptide (Lys-Gly) (interchain with G-Cter in ubiquitin)). Disordered regions lie at residues 507 to 540 (TRQK…ASAF) and 556 to 614 (NDSD…AVSA). Over residues 569-579 (GRGRGRGRRGG) the composition is skewed to basic residues. 9 positions are modified to asymmetric dimethylarginine: Arg570, Arg572, Arg574, Arg576, Arg577, Arg580, Arg587, Arg592, and Arg594. The GAR signature appears at 570–594 (RGRGRGRRGGRGQNSASRGGSQRGR). Over residues 599-614 (LETSTRSRNSKTAVSA) the composition is skewed to polar residues. Phosphoserine is present on Ser619. Lys625 is covalently cross-linked (Glycyl lysine isopeptide (Lys-Gly) (interchain with G-Cter in SUMO2)). At Ser641 the chain carries Phosphoserine. Phosphoserine; by PLK1 is present on Ser649. Residues 651-708 (VEEDIFPTTSKTDQRWSSTSSSKIMSQSQVSKGVDFESSEDDDDDPFMNTSSLRRNRR) form a disordered region. Residues 667–681 (SSTSSSKIMSQSQVS) are compositionally biased toward low complexity. Lys673 bears the N6-lactoyllysine mark. Phosphoserine; by ATM occurs at positions 676 and 678. The span at 687–696 (ESSEDDDDDP) shows a compositional bias: acidic residues. Ser688 is subject to Phosphoserine; by CDK2. Residues Ser689 and Ser701 each carry the phosphoserine modification. Residues 698-708 (MNTSSLRRNRR) are compositionally biased toward polar residues.

Belongs to the MRE11/RAD32 family. In terms of assembly, component of the MRN complex composed of two heterodimers RAD50 and MRE11 associated with a single NBN. The MRN complexes dimerize on DNA to form joined MRN-MRN oligomers required for DNA double-strand break repair. As part of the MRN complex, interacts with MCM9; the interaction recruits the complex to DNA repair sites. Component of the BASC complex, at least composed of BRCA1, MSH2, MSH6, MLH1, ATM, BLM, RAD50, MRE11 and NBN. Found in a complex with TERF2. Interacts with DCLRE1C/Artemis and DCLRE1B/Apollo. Interacts with ATF2. Interacts with EXD2. Interacts with MRNIP. Interacts with SAMHD1; leading to stimulate 3'-5' exonuclease activity. Interacts (when ubiquitinated) with UBQLN4 (via its UBA domain). Interacts with CYREN (via XLF motif). Interacts with GFI1; promoting methylation by PRMT1. Interacts with DYNLL1; inhibiting the activity of MRE11. Interacts with C1QBP and RAD50; interaction takes place in absence of DNA damage to form the MRC (MRE11-RAD50-C1QBP) complex that inhibits the activity of MRE11. Interacts with AGER/RAGE. AGER is recruited to DNA double-strand break sites where it enhances MRE11 endonuclease activity to promote DNA repair. As to quaternary structure, (Microbial infection) Interacts with herpes simplex virus 1 protein UL12. Mn(2+) serves as cofactor. Post-translationally, phosphorylated by ATM at Ser-676 and Ser-678 in response to DNA damage, promoting MRE11 activity: phosphorylation activates MRE11 by preventing the interaction between MRE11 and the C1QBP inhibitor. Phosphorylation at Ser-649 by PLK1 primes for phosphorylation at Ser-688 by CK2, inhibiting recruitment of the MRN complex to DNA damage sites. In terms of processing, asymmetric dimethylation by PRMT1 promotes MRE11 exonuclease activity. Lactylation at Lys-673 by CREBBP/CBP in response to DNA damage promotes DNA binding and MRE11 activity. Post-translationally, acetylated on lysine residues by KAT2A /GCN5. In terms of processing, ubiquitinated following DNA damage. Ubiquitination triggers interaction with UBQLN4, leading to MRE11 removal from chromatin and degradation by the proteasome. Ubiquitinated at Lys-339 and Lys-480 by RNF126 via 'Lys-27'- and 'Lys-29'-linked polyubiquitin chains, promoting the exonuclease activity of MRE11. SUMOylated by PIAS1, stabilizing MRE11 on chromatin during end resection. DeSUMOylated by SENP3 following removal from DNA double-strand breaks (DSBs). Post-translationally, ufmylation at Lys-282 promotes MRE11 activity and is required for activation of the ATM and ATR kinases by the MRN complex. In terms of processing, (Microbial infection) Following infection by adenovirus E4, ubiquitinated and degraded by a SCF-like E3 ubiquitin ligase complex containing viral proteins E1B-55K and E4-ORF6.

Its subcellular location is the nucleus. It is found in the chromosome. The protein resides in the telomere. Its activity is regulated as follows. Interaction with SAMHD1 stimulates the double-strand-specific 3'-5' exonuclease activity. RBBP8/CtIP specifically promotes the endonuclease activity to clear protein-DNA adducts and generate clean double-strand break ends. DYNLL1-binding inhibits the activity of MRE11. MRE11 activity is inhibited by C1QBP: in absence of DNA damage, C1QBP interacts with unphosphorylated MRE11, preventing formation and activity of the MRN complex. The mirin-derivative PFM39, specifically inhibits the 3'-5' exonuclease activity. The N-alkylated mirin-derivatives PFM03 and PFM01 specifically inhibit the endonuclease activity. In terms of biological role, core component of the MRN complex, which plays a central role in double-strand break (DSB) repair, DNA recombination, maintenance of telomere integrity and meiosis. The MRN complex is involved in the repair of DNA double-strand breaks (DSBs) via homologous recombination (HR), an error-free mechanism which primarily occurs during S and G2 phases. The complex (1) mediates the end resection of damaged DNA, which generates proper single-stranded DNA, a key initial steps in HR, and is (2) required for the recruitment of other repair factors and efficient activation of ATM and ATR upon DNA damage. Within the MRN complex, MRE11 possesses both single-strand endonuclease activity and double-strand-specific 3'-5' exonuclease activity. After DSBs, MRE11 is loaded onto DSBs sites and cleaves DNA by cooperating with RBBP8/CtIP to initiate end resection. MRE11 first endonucleolytically cleaves the 5' strand at DNA DSB ends to prevent non-homologous end joining (NHEJ) and licence HR. It then generates a single-stranded DNA gap via 3' to 5' exonucleolytic degradation to create entry sites for EXO1- and DNA2-mediated 5' to 3' long-range resection, which is required for single-strand invasion and recombination. RBBP8/CtIP specifically promotes the endonuclease activity of MRE11 to clear protein-DNA adducts and generate clean double-strand break ends. MRE11 endonuclease activity is also enhanced by AGER/RAGE. The MRN complex is also required for DNA damage signaling via activation of the ATM and ATR kinases: the nuclease activity of MRE11 is not required to activate ATM and ATR. The MRN complex is also required for the processing of R-loops. The MRN complex is involved in the activation of the cGAS-STING pathway induced by DNA damage during tumorigenesis: the MRN complex acts by displacing CGAS from nucleosome sequestration, thereby activating it. In telomeres the MRN complex may modulate t-loop formation. Functionally, MRE11 contains two DNA-binding domains (DBDs), enabling it to bind both single-stranded DNA (ssDNA) and double-stranded DNA (dsDNA). This Homo sapiens (Human) protein is Double-strand break repair protein MRE11.